The following is a 72-amino-acid chain: MPKSEIHPTWFSNAPVLSEGKTLCSIGSTKPQLQVDVWLGNHPFYTNSQTLVDSEGRVDRFMKKYGLQTKDN.

It belongs to the bacterial ribosomal protein bL31 family. Type A subfamily. In terms of assembly, part of the 50S ribosomal subunit.

It is found in the plastid. It localises to the chloroplast. In terms of biological role, binds the 23S rRNA. This Thalassiosira pseudonana (Marine diatom) protein is Large ribosomal subunit protein bL31c (rpl31).